Here is a 527-residue protein sequence, read N- to C-terminus: AAA ATPase forming ring-shaped complexes (527 aa).

Over residues 1-18 the composition is skewed to low complexity; that stretch reads MVTMSSPTDSSPSNSFSD. The interval 1–38 is disordered; that stretch reads MVTMSSPTDSSPSNSFSDFNREEQSRLSDEVRQLKRTN. Over residues 19–33 the composition is skewed to basic and acidic residues; that stretch reads FNREEQSRLSDEVRQ. Residues 21-53 adopt a coiled-coil conformation; it reads REEQSRLSDEVRQLKRTNSDLGARNAKLAEMLK. 257 to 262 contacts ATP; it reads GCGKTL. Residues 492–515 are disordered; sequence DENQQSEDLPNTSNPDEWSRITGR. Residues 497–507 are compositionally biased toward polar residues; the sequence is SEDLPNTSNPD.

This sequence belongs to the AAA ATPase family. In terms of assembly, homohexamer. Assembles into a hexameric ring structure.

The chain is AAA ATPase forming ring-shaped complexes from Corynebacterium glutamicum (strain R).